Here is a 467-residue protein sequence, read N- to C-terminus: Chromosomal replication initiator protein DnaA (467 aa).

Residues 1–90 (MSLSLWQQCL…KPVTQTPQAA (90 aa)) form a domain I, interacts with DnaA modulators region. The interval 91 to 130 (VTSNVAAPALVAQTQPQRAAPSTRSGWDNVPAPAEPTYRS) is domain II. A domain III, AAA+ region region spans residues 131-347 (NVNVKHTFDN…GALNRVIANA (217 aa)). Residues glycine 175, glycine 177, lysine 178, and threonine 179 each coordinate ATP. The domain IV, binds dsDNA stretch occupies residues 348–467 (NFTGRAITID…FSNLIRTLSS (120 aa)).

The protein belongs to the DnaA family. Oligomerizes as a right-handed, spiral filament on DNA at oriC.

It is found in the cytoplasm. Its function is as follows. Plays an essential role in the initiation and regulation of chromosomal replication. ATP-DnaA binds to the origin of replication (oriC) to initiate formation of the DNA replication initiation complex once per cell cycle. Binds the DnaA box (a 9 base pair repeat at the origin) and separates the double-stranded (ds)DNA. Forms a right-handed helical filament on oriC DNA; dsDNA binds to the exterior of the filament while single-stranded (ss)DNA is stabiized in the filament's interior. The ATP-DnaA-oriC complex binds and stabilizes one strand of the AT-rich DNA unwinding element (DUE), permitting loading of DNA polymerase. After initiation quickly degrades to an ADP-DnaA complex that is not apt for DNA replication. Binds acidic phospholipids. The protein is Chromosomal replication initiator protein DnaA of Shigella dysenteriae serotype 1 (strain Sd197).